The primary structure comprises 845 residues: AdoMet-dependent rRNA methyltransferase SPB1 (845 aa).

Residues glycine 58, tryptophan 60, aspartate 78, aspartate 94, and aspartate 119 each contribute to the S-adenosyl-L-methionine site. Residue lysine 159 is the Proton acceptor of the active site. Disordered stretches follow at residues 223–247 (GGGN…SQRQ) and 279–298 (SLNK…DDDH). Coiled coils occupy residues 366–402 (TEEQ…KEII) and 464–502 (DEEE…ERDA). Over residues 496 to 512 (RKAERDANYRAKQARGD) the composition is skewed to basic and acidic residues. 3 disordered regions span residues 496–546 (RKAE…DDDE), 587–660 (ENKT…HQQK), and 788–821 (KLNK…VKGK). Composition is skewed to acidic residues over residues 513–528 (ADDE…NDDV), 536–545 (MESESDDDDD), 610–624 (NEND…ESDF), and 633–648 (DDDD…DDEV). Residues 739–796 (IKKVLEAQSRKKLRALKRLEKIKKKSDLINEDSGKSERDKADEISKLMKKLNKKQKQK) adopt a coiled-coil conformation. Positions 788–797 (KLNKKQKQKP) are enriched in basic residues.

The protein belongs to the class I-like SAM-binding methyltransferase superfamily. RNA methyltransferase RlmE family. SPB1 subfamily. Component of the nucleolar and nucleoplasmic pre-60S ribosomal particle.

It is found in the nucleus. The protein resides in the nucleolus. The catalysed reaction is a ribonucleotide in rRNA + S-adenosyl-L-methionine = a 2'-O-methylribonucleotide in rRNA + S-adenosyl-L-homocysteine + H(+). In terms of biological role, required for proper assembly of pre-ribosomal particles during the biogenesis of the 60S ribosomal subunit. This chain is AdoMet-dependent rRNA methyltransferase SPB1, found in Candida albicans (strain SC5314 / ATCC MYA-2876) (Yeast).